The primary structure comprises 420 residues: Probable glucuronosyltransferase Os04g0398600 (420 aa).

The Cytoplasmic portion of the chain corresponds to 1–4 (MGSR). Residues 5–25 (TVGWWLLAAAVVLAAAAADSG) traverse the membrane as a helical; Signal-anchor for type II membrane protein segment. Over 26–420 (EAERAAEQHS…AGPVGDLKAW (395 aa)) the chain is Lumenal. N-linked (GlcNAc...) asparagine glycosylation is found at Asn-147 and Asn-408.

It belongs to the glycosyltransferase 47 family.

The protein localises to the golgi apparatus membrane. In terms of biological role, involved in the synthesis of glucuronoxylan hemicellulose in secondary cell walls. The protein is Probable glucuronosyltransferase Os04g0398600 of Oryza sativa subsp. japonica (Rice).